The chain runs to 96 residues: Small ribosomal subunit protein bS6 (96 aa).

It belongs to the bacterial ribosomal protein bS6 family.

Binds together with bS18 to 16S ribosomal RNA. The polypeptide is Small ribosomal subunit protein bS6 (Salinispora arenicola (strain CNS-205)).